Reading from the N-terminus, the 263-residue chain is Acetylglutamate kinase (263 aa).

Residues 48 to 49 (GG), R70, and N162 contribute to the substrate site.

Belongs to the acetylglutamate kinase family. ArgB subfamily.

It localises to the cytoplasm. The catalysed reaction is N-acetyl-L-glutamate + ATP = N-acetyl-L-glutamyl 5-phosphate + ADP. It participates in amino-acid biosynthesis; L-arginine biosynthesis; N(2)-acetyl-L-ornithine from L-glutamate: step 2/4. Functionally, catalyzes the ATP-dependent phosphorylation of N-acetyl-L-glutamate. In Vibrio vulnificus (strain CMCP6), this protein is Acetylglutamate kinase.